The sequence spans 391 residues: tRNA-specific 2-thiouridylase MnmA (391 aa).

Residues G9 to S16 and M35 contribute to the ATP site. The interaction with target base in tRNA stretch occupies residues N95–D97. Residue C100 is the Nucleophile of the active site. Residues C100 and C196 are joined by a disulfide bond. Residue G124 coordinates ATP. The segment at K146 to Q148 is interaction with tRNA. The active-site Cysteine persulfide intermediate is C196. An interaction with tRNA region spans residues R308–Y309. Polar residues predominate over residues T372–G382. The segment at T372–R391 is disordered.

Belongs to the MnmA/TRMU family.

The protein resides in the cytoplasm. The catalysed reaction is S-sulfanyl-L-cysteinyl-[protein] + uridine(34) in tRNA + AH2 + ATP = 2-thiouridine(34) in tRNA + L-cysteinyl-[protein] + A + AMP + diphosphate + H(+). Functionally, catalyzes the 2-thiolation of uridine at the wobble position (U34) of tRNA, leading to the formation of s(2)U34. This Burkholderia cenocepacia (strain ATCC BAA-245 / DSM 16553 / LMG 16656 / NCTC 13227 / J2315 / CF5610) (Burkholderia cepacia (strain J2315)) protein is tRNA-specific 2-thiouridylase MnmA.